Here is an 89-residue protein sequence, read N- to C-terminus: Small ribosomal subunit protein uS15 (89 aa).

Belongs to the universal ribosomal protein uS15 family. In terms of assembly, part of the 30S ribosomal subunit. Forms a bridge to the 50S subunit in the 70S ribosome, contacting the 23S rRNA.

Functionally, one of the primary rRNA binding proteins, it binds directly to 16S rRNA where it helps nucleate assembly of the platform of the 30S subunit by binding and bridging several RNA helices of the 16S rRNA. Its function is as follows. Forms an intersubunit bridge (bridge B4) with the 23S rRNA of the 50S subunit in the ribosome. This chain is Small ribosomal subunit protein uS15, found in Bordetella avium (strain 197N).